The sequence spans 401 residues: Homeobox protein engrailed-1 (401 aa).

4 disordered regions span residues M1 to Q102, G138 to G167, S229 to P253, and R293 to P315. The span at D13–V48 shows a compositional bias: low complexity. Pro residues-rich tracts occupy residues S49–P64 and P73–Q88. Residues H89–Q102 show a composition bias toward low complexity. 2 stretches are compositionally biased toward gly residues: residues G138–S147 and S234–G243. A DNA-binding region (homeobox) is located at residues D312–T371.

The protein belongs to the engrailed homeobox family.

The protein resides in the nucleus. Required for proper formation of the apical ectodermal ridge and correct dorsal-ventral patterning in the limb. The polypeptide is Homeobox protein engrailed-1 (En1) (Mus musculus (Mouse)).